The sequence spans 543 residues: CTP synthase (543 aa).

The tract at residues 1-265 (MTRYIFVTGG…DDFVVERFGL (265 aa)) is amidoligase domain. Residue Ser13 participates in CTP binding. Ser13 contacts UTP. ATP is bound by residues 14–19 (SLGKGI) and Asp71. 2 residues coordinate Mg(2+): Asp71 and Glu139. CTP-binding positions include 146–148 (DIE), 186–191 (KTKPTQ), and Lys222. UTP contacts are provided by residues 186–191 (KTKPTQ) and Lys222. Residues 290-541 (TIAMVGKYME…VKAALAQHQK (252 aa)) form the Glutamine amidotransferase type-1 domain. Gly351 provides a ligand contact to L-glutamine. The active-site Nucleophile; for glutamine hydrolysis is Cys378. L-glutamine is bound by residues 379–382 (LGMQ), Glu402, and Arg469. Catalysis depends on residues His514 and Glu516.

Belongs to the CTP synthase family. As to quaternary structure, homotetramer.

The catalysed reaction is UTP + L-glutamine + ATP + H2O = CTP + L-glutamate + ADP + phosphate + 2 H(+). It carries out the reaction L-glutamine + H2O = L-glutamate + NH4(+). It catalyses the reaction UTP + NH4(+) + ATP = CTP + ADP + phosphate + 2 H(+). It functions in the pathway pyrimidine metabolism; CTP biosynthesis via de novo pathway; CTP from UDP: step 2/2. Allosterically activated by GTP, when glutamine is the substrate; GTP has no effect on the reaction when ammonia is the substrate. The allosteric effector GTP functions by stabilizing the protein conformation that binds the tetrahedral intermediate(s) formed during glutamine hydrolysis. Inhibited by the product CTP, via allosteric rather than competitive inhibition. Functionally, catalyzes the ATP-dependent amination of UTP to CTP with either L-glutamine or ammonia as the source of nitrogen. Regulates intracellular CTP levels through interactions with the four ribonucleotide triphosphates. This Pseudomonas fluorescens (strain Pf0-1) protein is CTP synthase.